Reading from the N-terminus, the 412-residue chain is Phosphoglycerate kinase, plasmid (412 aa).

Residues 39–41 (DLN), Arg55, 78–81 (HLGR), Arg133, and Arg166 each bind substrate. Residues Lys217, Glu339, and 365-368 (GGDT) each bind ATP.

The protein belongs to the phosphoglycerate kinase family. As to quaternary structure, monomer.

It is found in the cytoplasm. It carries out the reaction (2R)-3-phosphoglycerate + ATP = (2R)-3-phospho-glyceroyl phosphate + ADP. It participates in carbohydrate biosynthesis; Calvin cycle. The protein is Phosphoglycerate kinase, plasmid (cbbKP) of Cupriavidus necator (strain ATCC 17699 / DSM 428 / KCTC 22496 / NCIMB 10442 / H16 / Stanier 337) (Ralstonia eutropha).